The following is a 295-amino-acid chain: Bifunctional protein FolD (295 aa).

NADP(+)-binding positions include 172–174 (GRS), Ser197, and Ile238.

Belongs to the tetrahydrofolate dehydrogenase/cyclohydrolase family. As to quaternary structure, homodimer.

It carries out the reaction (6R)-5,10-methylene-5,6,7,8-tetrahydrofolate + NADP(+) = (6R)-5,10-methenyltetrahydrofolate + NADPH. The catalysed reaction is (6R)-5,10-methenyltetrahydrofolate + H2O = (6R)-10-formyltetrahydrofolate + H(+). It functions in the pathway one-carbon metabolism; tetrahydrofolate interconversion. In terms of biological role, catalyzes the oxidation of 5,10-methylenetetrahydrofolate to 5,10-methenyltetrahydrofolate and then the hydrolysis of 5,10-methenyltetrahydrofolate to 10-formyltetrahydrofolate. This is Bifunctional protein FolD from Rickettsia akari (strain Hartford).